Consider the following 734-residue polypeptide: Photosystem I P700 chlorophyll a apoprotein A2 (734 aa).

8 helical membrane-spanning segments follow: residues 46–69, 135–158, 175–199, 273–291, 330–353, 369–395, 417–439, and 517–535; these read IFASHFGHLAVIFLWTSGNLFHVA, LYAGSLFLLFLAGVFLFAGWLHLQ, LNHHLSGLFGFSSLAWSAHLIHVAI, IAHHHLAIGVVFIFAGHMY, LHFQLGLALASLGVITSLVAQHMY, SALYTHHQYIAGFLMVGAFAHGAIFFV, AIISHLSWVSLFLGFHTLGIYVH, and FLIHHAIALALHTTTLILV. [4Fe-4S] cluster is bound by residues Cys559 and Cys568. Helical transmembrane passes span 575 to 596 and 643 to 665; these read AFYLSMFWMLNTIGWVTFYWHW and LSVWSWMFLFGHLIWATGFMFLI. Residues His654, Met662, and Tyr670 each coordinate chlorophyll a. Trp671 lines the phylloquinone pocket. Residues 707–727 traverse the membrane as a helical segment; that stretch reads LVGLIHFTAGYIFTYAAFVIA.

It belongs to the PsaA/PsaB family. As to quaternary structure, the PsaA/B heterodimer binds the P700 chlorophyll special pair and subsequent electron acceptors. PSI consists of a core antenna complex that captures photons, and an electron transfer chain that converts photonic excitation into a charge separation. The eukaryotic PSI reaction center is composed of at least 11 subunits. The cofactor is P700 is a chlorophyll a/chlorophyll a' dimer, A0 is one or more chlorophyll a, A1 is one or both phylloquinones and FX is a shared 4Fe-4S iron-sulfur center..

The protein resides in the plastid. The protein localises to the chloroplast thylakoid membrane. The catalysed reaction is reduced [plastocyanin] + hnu + oxidized [2Fe-2S]-[ferredoxin] = oxidized [plastocyanin] + reduced [2Fe-2S]-[ferredoxin]. Its function is as follows. PsaA and PsaB bind P700, the primary electron donor of photosystem I (PSI), as well as the electron acceptors A0, A1 and FX. PSI is a plastocyanin/cytochrome c6-ferredoxin oxidoreductase, converting photonic excitation into a charge separation, which transfers an electron from the donor P700 chlorophyll pair to the spectroscopically characterized acceptors A0, A1, FX, FA and FB in turn. Oxidized P700 is reduced on the lumenal side of the thylakoid membrane by plastocyanin or cytochrome c6. The protein is Photosystem I P700 chlorophyll a apoprotein A2 of Rhodomonas salina (Cryptomonas salina).